The chain runs to 89 residues: Small ribosomal subunit protein uS14 (89 aa).

This sequence belongs to the universal ribosomal protein uS14 family. Part of the 30S ribosomal subunit. Contacts proteins S3 and S10.

Binds 16S rRNA, required for the assembly of 30S particles and may also be responsible for determining the conformation of the 16S rRNA at the A site. The protein is Small ribosomal subunit protein uS14 of Chlorobaculum tepidum (strain ATCC 49652 / DSM 12025 / NBRC 103806 / TLS) (Chlorobium tepidum).